Consider the following 80-residue polypeptide: CLAVATA3/ESR (CLE)-related protein 14 (80 aa).

The N-terminal stretch at 1–26 (MKVWSQRLSFLIVMIFILAGLHSSSA) is a signal peptide. Hydroxyproline occurs at positions 71 and 74. An O-linked (Ara...) hydroxyproline glycan is attached at Pro-74.

The protein belongs to the CLV3/ESR signal peptide family. In terms of assembly, interacts with the extracellular leucine-rich repeat region of CLV2 and PEPR2. The O-glycosylation (arabinosylation) of the hydroxyproline Pro-74 enhances binding affinity of the CLE14p peptide for its receptor. As to expression, mostly expressed in roots, and, to a lower extent, in seedlings and leaves. Expressed in the primary root tip under Pi deficiency.

It is found in the secreted. Its subcellular location is the extracellular space. In terms of biological role, extracellular signal peptide that regulates cell fate. Represses root apical meristem maintenance. Acts as an elicitor of the root meristem differentiation through the CLV2/CRN complex signaling pathway. Inhibits irreversibly root growth by reducing cell division rates in the root apical meristem. Regulates the transition of protophloem cells from proliferation to differentiation, thus impinging on postembryonic growth capacity of the root meristem; this signaling pathway requires CRN and CLV2. In Arabidopsis thaliana (Mouse-ear cress), this protein is CLAVATA3/ESR (CLE)-related protein 14.